Consider the following 359-residue polypeptide: Putative mannose-1-phosphate guanyltransferase (359 aa).

The protein belongs to the transferase hexapeptide repeat family.

It carries out the reaction alpha-D-mannose 1-phosphate + GTP + H(+) = GDP-alpha-D-mannose + diphosphate. The chain is Putative mannose-1-phosphate guanyltransferase (mpg1) from Sulfolobus acidocaldarius (strain ATCC 33909 / DSM 639 / JCM 8929 / NBRC 15157 / NCIMB 11770).